The sequence spans 361 residues: Phenylalanine--tRNA ligase alpha subunit (361 aa).

Residue Glu260 coordinates Mg(2+).

The protein belongs to the class-II aminoacyl-tRNA synthetase family. Phe-tRNA synthetase alpha subunit type 1 subfamily. In terms of assembly, tetramer of two alpha and two beta subunits. Requires Mg(2+) as cofactor.

The protein resides in the cytoplasm. The enzyme catalyses tRNA(Phe) + L-phenylalanine + ATP = L-phenylalanyl-tRNA(Phe) + AMP + diphosphate + H(+). In Bartonella henselae (strain ATCC 49882 / DSM 28221 / CCUG 30454 / Houston 1) (Rochalimaea henselae), this protein is Phenylalanine--tRNA ligase alpha subunit.